The following is a 677-amino-acid chain: UvrABC system protein B (677 aa).

One can recognise a Helicase ATP-binding domain in the interval 24–412 (EGVLEGVPAQ…EGIVVEQVIR (389 aa)). 37-44 (GVTGSGKT) is a binding site for ATP. The Beta-hairpin motif lies at 90–113 (YYDYYQPEAYLPSSDTYIEKDLAI). A Helicase C-terminal domain is found at 429–591 (QIDDLMEEIQ…ITPQQIKKAR (163 aa)). In terms of domain architecture, UVR spans 635-670 (EKSMERTRKLMQEAAKKLEFIEAAQYRDELLKMEDL).

It belongs to the UvrB family. In terms of assembly, forms a heterotetramer with UvrA during the search for lesions. Interacts with UvrC in an incision complex.

Its subcellular location is the cytoplasm. The UvrABC repair system catalyzes the recognition and processing of DNA lesions. A damage recognition complex composed of 2 UvrA and 2 UvrB subunits scans DNA for abnormalities. Upon binding of the UvrA(2)B(2) complex to a putative damaged site, the DNA wraps around one UvrB monomer. DNA wrap is dependent on ATP binding by UvrB and probably causes local melting of the DNA helix, facilitating insertion of UvrB beta-hairpin between the DNA strands. Then UvrB probes one DNA strand for the presence of a lesion. If a lesion is found the UvrA subunits dissociate and the UvrB-DNA preincision complex is formed. This complex is subsequently bound by UvrC and the second UvrB is released. If no lesion is found, the DNA wraps around the other UvrB subunit that will check the other stand for damage. This Bacteroides fragilis (strain ATCC 25285 / DSM 2151 / CCUG 4856 / JCM 11019 / LMG 10263 / NCTC 9343 / Onslow / VPI 2553 / EN-2) protein is UvrABC system protein B.